The primary structure comprises 556 residues: MTMLKDPSKKYRAFPTIDLPDRTWPSKTIDAVPIWCSSDLRDGNQSLIEPMDAAKKLRFWKTLVSVGVKEIEASFPSASQTDFDFVRTLIEDGHIPDDTTIQVLTQAREDLIARTFESLRGAKKAIVHLYNATCPSFRRIVFNQDKAGVKEIAVNAAKLFVKYAAQQPETQWTFQYSPETFSATELEFAKEVCDAVIEVWNPTPENKVILNLPATVEVATPNIYADQIEWFGRNITRRDSVLISLHTHNDRGTGVAATELGLMAGADRVEGCLFGNGERTGNVDLVTVALNLYTQGINPGLDFSDIDGVRKVVEECNQIPVHPRHPYVGDLVHTAFSGSHQDAIRKGFTQQKEGELWEVPYLPIDPADIGRSYEAVIRVNSQSGKGGIAYLLEQEYGISLPRRMQIEFSQVVQGETDRLGLEMTAEQIHSLLRREYLQANVPYALISHKLQEENGNSSVDAEVHVDGETQHWRGKGKGALEALVAGLPVAVEIMDYNEHAIGSGTTAKAAAYIELRVNGERAVHGVGIDENITTASFRALFSALNRSLSQTQAKAA.

In terms of domain architecture, Pyruvate carboxyltransferase spans 33–307 (PIWCSSDLRD…NPGLDFSDID (275 aa)). Mg(2+)-binding residues include D42, H246, H248, and N282. Positions 439–556 (ANVPYALISH…SLSQTQAKAA (118 aa)) are regulatory domain.

Belongs to the alpha-IPM synthase/homocitrate synthase family. LeuA type 2 subfamily. In terms of assembly, homodimer. The cofactor is Mg(2+).

Its subcellular location is the cytoplasm. The catalysed reaction is 3-methyl-2-oxobutanoate + acetyl-CoA + H2O = (2S)-2-isopropylmalate + CoA + H(+). It functions in the pathway amino-acid biosynthesis; L-leucine biosynthesis; L-leucine from 3-methyl-2-oxobutanoate: step 1/4. Functionally, catalyzes the condensation of the acetyl group of acetyl-CoA with 3-methyl-2-oxobutanoate (2-ketoisovalerate) to form 3-carboxy-3-hydroxy-4-methylpentanoate (2-isopropylmalate). This Pseudomonas syringae pv. syringae (strain B728a) protein is 2-isopropylmalate synthase.